Here is a 488-residue protein sequence, read N- to C-terminus: 1-aminocyclopropane-1-carboxylate synthase-like protein 1 (488 aa).

The residue at position 273 (Lys-273) is an N6-(pyridoxal phosphate)lysine.

This sequence belongs to the class-I pyridoxal-phosphate-dependent aminotransferase family. In terms of assembly, homodimer. In terms of tissue distribution, expressed in young leaves and flowers. Not expressed in roots.

This is 1-aminocyclopropane-1-carboxylate synthase-like protein 1 (ACS1) from Arabidopsis thaliana (Mouse-ear cress).